The sequence spans 284 residues: Bifunctional protein FolD (284 aa).

Residues Gly-165–Ser-167 and Ser-190 contribute to the NADP(+) site.

Belongs to the tetrahydrofolate dehydrogenase/cyclohydrolase family. As to quaternary structure, homodimer.

The enzyme catalyses (6R)-5,10-methylene-5,6,7,8-tetrahydrofolate + NADP(+) = (6R)-5,10-methenyltetrahydrofolate + NADPH. It carries out the reaction (6R)-5,10-methenyltetrahydrofolate + H2O = (6R)-10-formyltetrahydrofolate + H(+). Its pathway is one-carbon metabolism; tetrahydrofolate interconversion. Its function is as follows. Catalyzes the oxidation of 5,10-methylenetetrahydrofolate to 5,10-methenyltetrahydrofolate and then the hydrolysis of 5,10-methenyltetrahydrofolate to 10-formyltetrahydrofolate. In Streptococcus pyogenes serotype M28 (strain MGAS6180), this protein is Bifunctional protein FolD.